The primary structure comprises 272 residues: Neurogenin-2 (272 aa).

Positions 30-69 are disordered; that stretch reads LTPLSSSADEEEEEEPGASGGARRQRGAEAGQGARGGVAA. The region spanning 112–164 is the bHLH domain; that stretch reads TRRLKANNRERNRMHNLNAALDALREVLPTFPEDAKLTKIETLRFAHNYIWAL. Low complexity predominate over residues 197 to 239; sequence ASAALSSSGDSPSPASTWSCTNSPAPSSSVSSNSTSPYSCTLS. The segment at 197–264 is disordered; sequence ASAALSSSGD…PPDKHRYAPH (68 aa).

As to quaternary structure, efficient DNA binding requires dimerization with another bHLH protein.

The protein resides in the nucleus. Functionally, transcriptional regulator. Involved in neuronal differentiation. Activates transcription by binding to the E box (5'-CANNTG-3'). This Homo sapiens (Human) protein is Neurogenin-2 (NEUROG2).